Consider the following 141-residue polypeptide: Hemoglobin subunit alpha-A (141 aa).

Residues 1–141 (VLSAADKTNV…VSTVLTAKYR (141 aa)) enclose the Globin domain. O2 is bound at residue His-58. His-87 serves as a coordination point for heme b.

This sequence belongs to the globin family. Heterotetramer of two alpha chains and two beta chains. In terms of tissue distribution, red blood cells.

Its function is as follows. Involved in oxygen transport from the lung to the various peripheral tissues. The sequence is that of Hemoglobin subunit alpha-A (HBAA) from Eudynamys scolopaceus (Western koel).